The sequence spans 1253 residues: Structural polyprotein (1253 aa).

The interval 37–71 is host transcription inhibition; it reads FQAQQMQQLISAVNALTMRQNAIAPARPPKPKKKK. The disordered stretch occupies residues 58 to 109; the sequence is AIAPARPPKPKKKKTTKPKPKTQPKKINGKTQQQKKKDKQADKKKKKPGKRE. The Nuclear localization signal motif lies at 64–105; it reads PPKPKKKKTTKPKPKTQPKKINGKTQQQKKKDKQADKKKKKP. Residues 65–107 are compositionally biased toward basic residues; sequence PKPKKKKTTKPKPKTQPKKINGKTQQQKKKDKQADKKKKKPGK. Residues 87-120 form a binding to the viral RNA region; it reads KTQQQKKKDKQADKKKKKPGKRERMCMKIENDCI. The segment at 105–119 is ribosome-binding; it reads PGKRERMCMKIENDC. A disulfide bridge connects residues cysteine 119 and cysteine 134. The Peptidase S3 domain maps to 119–267; the sequence is CIFEVKHEGK…RVTPEGSEEW (149 aa). Residue histidine 145 is the Charge relay system of the active site. The Nuclear export signal signature appears at 150 to 160; it reads IDNADLAKLAF. An interaction with spike glycoprotein E2 region spans residues 161–166; the sequence is KKSSKY. The active-site Charge relay system is the aspartate 167. The interval 189 to 199 is dimerization of the capsid protein; the sequence is PEGHYNWHHGA. Serine 219 acts as the Charge relay system in catalysis. The segment at 225–229 is dimerization of the capsid protein; sequence DNKGR. The Extracellular segment spans residues 268 to 701; sequence SAPLITAMCV…YGLYPAATVS (434 aa). Intrachain disulfides connect cysteine 276–cysteine 285, cysteine 290–cysteine 294, and cysteine 293–cysteine 325. The N-linked (GlcNAc...) asparagine; by host glycan is linked to asparagine 280. Residue asparagine 327 is glycosylated (N-linked (GlcNAc...) asparagine; by host). 6 cysteine pairs are disulfide-bonded: cysteine 352-cysteine 458, cysteine 355-cysteine 361, cysteine 424-cysteine 438, cysteine 486-cysteine 598, cysteine 534-cysteine 558, and cysteine 536-cysteine 553. Asparagine 533 carries an N-linked (GlcNAc...) asparagine; by host glycan. N-linked (GlcNAc...) asparagine; by host glycosylation occurs at asparagine 595. Residues 702–722 form a helical membrane-spanning segment; the sequence is AVVGMSLLALISIFASCYMLV. The S-stearoyl cysteine; by host moiety is linked to residue cysteine 718. The interval 723–727 is interaction with the capsid protein; the sequence is AARSK. Residues 723–755 are Cytoplasmic-facing; sequence AARSKCLTPYALTPGAAVPWTLGILCCAPRAHA. Residue cysteine 728 is the site of S-stearoyl cysteine; by host attachment. Residues 728–748 are transient transmembrane before p62-6K protein processing; it reads CLTPYALTPGAAVPWTLGILC. Cysteine 728 and cysteine 749 are oxidised to a cystine. Residues cysteine 748 and cysteine 749 are each lipidated (S-palmitoyl cysteine; by host). Over 756-770 the chain is Extracellular; sequence ASVAETMAYLWDQNQ. Residues 771–791 form a helical membrane-spanning segment; the sequence is ALFWLEFAAPVACILIITYCL. Position 792 (arginine 792) is a topological domain, cytoplasmic. A helical membrane pass occupies residues 793–813; it reads NVLCCCKSLSFLVLLSLGATA. Residues 814 to 1230 are Extracellular-facing; the sequence is RAYEHSTVMP…ALSWVQKISG (417 aa). 4 disulfide bridges follow: cysteine 864–cysteine 929, cysteine 877–cysteine 909, cysteine 878–cysteine 911, and cysteine 883–cysteine 893. The interval 899-916 is E1 fusion peptide loop; sequence VYPFMWGGAYCFCDSENT. Residues asparagine 956 and asparagine 1085 are each glycosylated (N-linked (GlcNAc...) asparagine; by host). Disulfide bonds link cysteine 1074–cysteine 1086, cysteine 1116–cysteine 1191, cysteine 1121–cysteine 1195, and cysteine 1143–cysteine 1185. The E1-DIII; interaction with host receptor VLDLR stretch occupies residues 1112-1192; that stretch reads IDLTCTVATC…SLCSARATCS (81 aa). The helical transmembrane segment at 1231 to 1251 threads the bilayer; it reads GLGAFAIGAILVLVVVTCIGL. Cysteine 1248 carries S-stearoyl cysteine; by host lipidation. Residues 1252–1253 lie on the Cytoplasmic side of the membrane; it reads RR.

As to quaternary structure, homodimer. Homomultimer. Interacts with host karyopherin KPNA4; this interaction allows the nuclear import of the viral capsid protein. Interacts with spike glycoprotein E2. Interacts with host IRAK1; the interaction leads to inhibition of IRAK1-dependent signaling. The precursor of protein E3/E2 and E1 form a heterodimer shortly after synthesis. In terms of assembly, the precursor of protein E3/E2 and E1 form a heterodimer shortly after synthesis. Processing of the precursor of protein E3/E2 into E2 and E3 results in a heterodimer of the spike glycoproteins E2 and E1. Spike at virion surface are constituted of a trimer of E2-E1 heterodimers. E2-E1 heterodimers interact with host VLDLR or LRP8/APOER2 to mediate viral entry. After target cell attachment and endocytosis, E1 change conformation to form homotrimers. Interacts with 6K protein. Interacts (via E1-DIII) with host VLDLR (via class A repeats); this interaction mediates viral entry into host cell. As to quaternary structure, interacts with spike glycoprotein E1. Processing of the precursor of protein E3/E2 into E2 and E3 results in a heterodimer of the spike glycoproteins E2 and E1. Spike at virion surface are constituted of a trimer of E2-E1 heterodimers. E2-E1 heterodimers interact with host VLDLR or LRP8/APOER2 to mediate viral entry. Interacts with 6K protein. Oligomer. Interacts with spike glycoprotein E1. Interacts with spike glycoprotein E2. Specific enzymatic cleavages in vivo yield mature proteins. Capsid protein is auto-cleaved during polyprotein translation, unmasking a signal peptide at the N-terminus of the precursor of E3/E2. The remaining polyprotein is then targeted to the host endoplasmic reticulum, where host signal peptidase cleaves it into pE2, 6K and E1 proteins. pE2 is further processed to mature E3 and E2 by host furin in trans-Golgi vesicle. Protein processing process takes about 30 minutes at physiologic temperatures. The folding of the p62/6K/E1 precursor requires the formation of intrachain disulfide bonds and has been shown to involve a transient covalent interaction between the nascent and newly synthesized heterodimer and the host-cell chaperones, P4HB/PDI and PDIA3/ERp57. The folding pathway also includes non covalent interaction with human CANX/calnexin and CALR/calreticulin. In terms of processing, palmitoylated via thioester bonds. These palmitoylations may induce disruption of the C-terminus transmembrane. This would result in the reorientation of E2 C-terminus from lumenal to cytoplasmic side. Post-translationally, envelope E1, E2 and E3 proteins are N-glycosylated. Stearoylated. In terms of processing, palmitoylated via thioester bonds with about four covalently bound fatty acids per molecule.

Its subcellular location is the virion. The protein localises to the host cytoplasm. It localises to the host cell membrane. It is found in the host nucleus. The protein resides in the virion membrane. Its subcellular location is the host Golgi apparatus. The protein localises to the host trans-Golgi network. It localises to the host endoplasmic reticulum. The enzyme catalyses Autocatalytic release of the core protein from the N-terminus of the togavirus structural polyprotein by hydrolysis of a -Trp-|-Ser- bond.. In terms of biological role, forms an icosahedral capsid with a T=4 symmetry composed of 240 copies of the capsid protein surrounded by a lipid membrane through which penetrate 80 spikes composed of trimers of E1-E2 heterodimers. The capsid protein binds to the viral RNA genome at a site adjacent to a ribosome binding site for viral genome translation following genome release. Possesses a protease activity that results in its autocatalytic cleavage from the nascent structural protein. Following its self-cleavage, the capsid protein transiently associates with ribosomes, and within several minutes the protein binds to viral RNA and rapidly assembles into icosahedric core particles. The resulting nucleocapsid eventually associates with the cytoplasmic domain of the spike glycoprotein E2 at the cell membrane, leading to budding and formation of mature virions. In case of infection, new virions attach to target cells and after clathrin-mediated endocytosis their membrane fuses with the host endosomal membrane. This leads to the release of the nucleocapsid into the cytoplasm, followed by an uncoating event necessary for the genomic RNA to become accessible. The uncoating might be triggered by the interaction of capsid proteins with ribosomes. Binding of ribosomes would release the genomic RNA since the same region is genomic RNA-binding and ribosome-binding. Specifically inhibits interleukin-1 receptor-associated kinase 1/IRAK1-dependent signaling during viral entry, representing a means by which the alphaviruses may evade innate immune detection and activation prior to viral gene expression. Its function is as follows. Provides the signal sequence for the translocation of the precursor of protein E3/E2 to the host endoplasmic reticulum. Furin-cleaved E3 remains associated with spike glycoprotein E1 and mediates pH protection of the latter during the transport via the secretory pathway. After virion release from the host cell, the assembly protein E3 is gradually released in the extracellular space. Plays a role in viral attachment to target host cell, by binding to the cell receptors VLDLR or LRP8/APOER2. The host LDLR can act as a cell receptor for viral entry. Synthesized as a p62 precursor which is processed by furin at the cell membrane just before virion budding, giving rise to E2-E1 heterodimer. The p62-E1 heterodimer is stable, whereas E2-E1 is unstable and dissociate at low pH. p62 is processed at the last step, presumably to avoid E1 fusion activation before its final export to cell surface. E2 C-terminus contains a transitory transmembrane that would be disrupted by palmitoylation, resulting in reorientation of the C-terminal tail from lumenal to cytoplasmic side. This step is critical since E2 C-terminus is involved in budding by interacting with capsid proteins. This release of E2 C-terminus in cytoplasm occurs lately in protein export, and precludes premature assembly of particles at the endoplasmic reticulum membrane. Functionally, acts as a viroporin that participates in virus glycoprotein processing and transport to the plasma membrane, cell permeabilization and budding of viral particles. Disrupts the calcium homeostasis of the cell, probably at the endoplasmic reticulum level. This leads to cytoplasmic calcium elevation. Because of its lipophilic properties, the 6K protein is postulated to influence the selection of lipids that interact with the transmembrane domains of the glycoproteins, which, in turn, affects the deformability of the bilayer required for the extreme curvature that occurs as budding proceeds. Present in low amount in virions, about 3% compared to viral glycoproteins. In terms of biological role, class II viral fusion protein. Fusion activity is inactive as long as E1 is bound to E2 in mature virion. After virus attachment to target cell via host VLDLR or LRP8/APOER2 and endocytosis, acidification of the endosome induces dissociation of E1/E2 heterodimer and concomitant trimerization of the E1 subunits. This E1 trimer is fusion active, and promotes release of viral nucleocapsid in cytoplasm after endosome and viral membrane fusion. Efficient fusion requires the presence of cholesterol and sphingolipid in the target membrane. Fusion is optimal at levels of about 1 molecule of cholesterol per 2 molecules of phospholipids, and is specific for sterols containing a 3-beta-hydroxyl group. In Aedes (Middle-African hedgehog), this protein is Structural polyprotein.